A 266-amino-acid chain; its full sequence is Small ribosomal subunit protein eS1 (266 aa).

The segment at 237-266 (DGGSKTGEVGETGSKVDRPEGYEPPVQETV) is disordered.

It belongs to the eukaryotic ribosomal protein eS1 family. As to quaternary structure, component of the small ribosomal subunit. Mature ribosomes consist of a small (40S) and a large (60S) subunit. The 40S subunit contains about 33 different proteins and 1 molecule of RNA (18S). The 60S subunit contains about 49 different proteins and 3 molecules of RNA (28S, 5.8S and 5S).

The protein localises to the cytoplasm. The protein is Small ribosomal subunit protein eS1 of Lysiphlebus testaceipes (Greenbugs aphid parastoid).